The following is a 263-amino-acid chain: Cytochrome c oxidase subunit 3 (263 aa).

Helical transmembrane passes span 7–27 (ITVL…KAHL), 44–64 (FSVG…VYSI), 78–98 (GMLS…WGIL), 120–140 (LILT…CLQF), 145–165 (GMSL…ECFA), 191–211 (VTGL…IYFI), and 241–261 (ITIL…YFFY).

Belongs to the cytochrome c oxidase subunit 3 family. In terms of assembly, component of the cytochrome c oxidase (complex IV, CIV), a multisubunit enzyme composed of a catalytic core of 3 subunits and several supernumerary subunits. The complex exists as a monomer or a dimer and forms supercomplexes (SCs) in the inner mitochondrial membrane with ubiquinol-cytochrome c oxidoreductase (cytochrome b-c1 complex, complex III, CIII).

It localises to the mitochondrion inner membrane. The catalysed reaction is 4 Fe(II)-[cytochrome c] + O2 + 8 H(+)(in) = 4 Fe(III)-[cytochrome c] + 2 H2O + 4 H(+)(out). Functionally, component of the cytochrome c oxidase, the last enzyme in the mitochondrial electron transport chain which drives oxidative phosphorylation. The respiratory chain contains 3 multisubunit complexes succinate dehydrogenase (complex II, CII), ubiquinol-cytochrome c oxidoreductase (cytochrome b-c1 complex, complex III, CIII) and cytochrome c oxidase (complex IV, CIV), that cooperate to transfer electrons derived from NADH and succinate to molecular oxygen, creating an electrochemical gradient over the inner membrane that drives transmembrane transport and the ATP synthase. Cytochrome c oxidase is the component of the respiratory chain that catalyzes the reduction of oxygen to water. Electrons originating from reduced cytochrome c in the intermembrane space (IMS) are transferred via the dinuclear copper A center (CU(A)) of subunit 2 and heme A of subunit 1 to the active site in subunit 1, a binuclear center (BNC) formed by heme A3 and copper B (CU(B)). The BNC reduces molecular oxygen to 2 water molecules using 4 electrons from cytochrome c in the IMS and 4 protons from the mitochondrial matrix. This Plasmodium vivax protein is Cytochrome c oxidase subunit 3 (COIII).